Here is a 438-residue protein sequence, read N- to C-terminus: Gamma-glutamyl phosphate reductase (438 aa).

The protein belongs to the gamma-glutamyl phosphate reductase family.

The protein localises to the cytoplasm. It catalyses the reaction L-glutamate 5-semialdehyde + phosphate + NADP(+) = L-glutamyl 5-phosphate + NADPH + H(+). The protein operates within amino-acid biosynthesis; L-proline biosynthesis; L-glutamate 5-semialdehyde from L-glutamate: step 2/2. Its function is as follows. Catalyzes the NADPH-dependent reduction of L-glutamate 5-phosphate into L-glutamate 5-semialdehyde and phosphate. The product spontaneously undergoes cyclization to form 1-pyrroline-5-carboxylate. This Prochlorococcus marinus (strain NATL2A) protein is Gamma-glutamyl phosphate reductase.